We begin with the raw amino-acid sequence, 1309 residues long: Disease resistance protein RPP2A (1309 aa).

The region spanning 9-173 is the TIR 1 domain; it reads RRYDVFPSFS…MVADDVSKKL (165 aa). Residue glutamate 84 is part of the active site. Positions 187–418 constitute an NB-ARC 1 domain; it reads EAHLEAMSSI…FKKTLRNYLP (232 aa). In terms of domain architecture, ALOG spans 488-585; sequence PNRRHSNDDW…KECILVFSCH (98 aa). The 164-residue stretch at 574–737 folds into the TIR 2 domain; sequence REKECILVFS…EVVRNASLRL (164 aa). The NB-ARC 2 domain maps to 755–987; that stretch reads SQSTDVEIMG…IFLDLACFFR (233 aa). Residues 1114-1141 are a coiled coil; sequence LPHGLDTLPDELSLLHWENYPLVYLPQK. 6 LRR repeats span residues 1145–1167, 1168–1195, 1214–1237, 1238–1258, 1259–1283, and 1285–1307; these read VNLVELNMPYSNMEKLWEGKKNL, EKLKNIKLSHSRELTDILMLSEALNLEH, CGKLVSLNMKDCSRLRSLPSMVDL, TTLKLLNLSGCSEFEDIQDFA, PNLEEIYLAGTSIRELPLSIRNLTE, and VTLDLENCERLQEMPSLPVEIIR.

Belongs to the disease resistance TIR-NB-LRR family.

The enzyme catalyses NAD(+) + H2O = ADP-D-ribose + nicotinamide + H(+). Disease resistance protein that cooperates with RPP2B to confer resistance to Hyaloperonospora parasitica isolate Cala2. This Arabidopsis thaliana (Mouse-ear cress) protein is Disease resistance protein RPP2A.